Consider the following 380-residue polypeptide: MTYFTGFILILFAIIIKRLTPSQSKKNIVLIANAFWGILLVGYTFNEQYFVPLSATTLFFILAFLFFFSMTYILIARSGRVVFSFGTGFIESKYIYWFAGMINIISICFGIILLYNNHFSLKVMREGILDGSISGFGLGISLPLSFCCMYLARHENKKNYFYCFTLLSFLLAVLSTSKIFLILFLVYIVGINSYVSKKKLLIYGVFVFGLFALSSIILGKFSSDPEGKIISAIFDTLRVYLFSGLAAFNLYVEKNATLPENLLLYPFKEVWGTTKDIPKTDILPWINIGVWDTNVYTAFAPWYQSLGLYAAIIIGILLGFYYGIWFSFRQNLAVGFYQTFLCFPLLMLFFQEHYLLSWKMHFIYFLCAILLAMRKALEYE.

12 helical membrane-spanning segments follow: residues 1–21 (MTYF…RLTP), 27–47 (NIVL…TFNE), 55–75 (ATTL…YILI), 94–114 (YIYW…IILL), 132–152 (SISG…MYLA), 169–189 (FLLA…VYIV), 201–221 (LIYG…LGKF), 229–249 (IISA…AAFN), 282–302 (ILPW…FAPW), 306–326 (LGLY…GIWF), 332–352 (LAVG…FFQE), and 353–373 (HYLL…LLAM).

It localises to the cell inner membrane. The enzyme catalyses n lipid-linked O-antigen repeat units = a lipid-linked O antigen + (n-1) polyisoprenyl diphosphate.. The protein operates within bacterial outer membrane biogenesis; LPS O-antigen biosynthesis. Its function is as follows. Polymerase involved in the biosynthesis of the lipopolysaccharide (LPS). Catalyzes the polymerization of the O-antigen repeat units on the periplasmic face of the inner membrane, leading to the formation of the lipid-linked O-antigen molecule. In Shigella dysenteriae, this protein is O-antigen polymerase.